We begin with the raw amino-acid sequence, 505 residues long: Trans-cinnamate 4-monooxygenase (505 aa).

The chain crosses the membrane as a helical span at residues 3–23; sequence LLLLEKSLIAVFVAVILATVI. Residues 213 to 218 and A306 each bind (E)-cinnamate; that span reads RSRLAQ. C447 is a heme binding site.

This sequence belongs to the cytochrome P450 family. Heme is required as a cofactor. As to expression, expressed in roots, leaves, stems, flowers and siliques.

It localises to the membrane. The enzyme catalyses (E)-cinnamate + reduced [NADPH--hemoprotein reductase] + O2 = (E)-4-coumarate + oxidized [NADPH--hemoprotein reductase] + H2O + H(+). The protein operates within phenylpropanoid metabolism; trans-4-coumarate biosynthesis; trans-4-coumarate from trans-cinnamate: step 1/1. Catalyzes the first oxidative step of the phenylpropanoid pathway in higher plants by transforming trans-cinnamate into p-coumarate. The compounds formed by this pathway are essential components for lignification, pollination, and defense against ultraviolet light, predators and pathogens. The protein is Trans-cinnamate 4-monooxygenase of Arabidopsis thaliana (Mouse-ear cress).